The following is a 297-amino-acid chain: MNIELRHLRYFVAVAEELHFGRAAARLNISQPPLSQQIQALEQQIGARLLARTNRSVLLTAAGKQFLADSRQILSMVDDAAARAERLHQGEAGELRIGFTSSAPFIRAVSDTLSLFRRDYPDVHLQTREMNTREQIAPLIEGTLDMGLLRNTALPESLEHAVIVHEPLMAMIPHDHPLANNPNVTLAELAKEPFVFFDPHVGTGLYDDILGLMRRYHLTPVITQEVGEAMTIIGLVSAGLGVSILPASFKRVQLNEMRWVPIAEEDAVSEMWLVWPKHHEQSPAARNFRIHLLNALR.

Positions 1–60 constitute an HTH lysR-type domain; it reads MNIELRHLRYFVAVAEELHFGRAAARLNISQPPLSQQIQALEQQIGARLLARTNRSVLLT. The H-T-H motif DNA-binding region spans 20–40; that stretch reads FGRAAARLNISQPPLSQQIQA.

This sequence belongs to the LysR transcriptional regulatory family.

This is an uncharacterized protein from Escherichia coli (strain K12).